We begin with the raw amino-acid sequence, 359 residues long: MQAAALPEEIRWLLEDAEEFLAEGLRNENLSAVARDHRDHILRGFQQIKARYYWDFQPQGGDIGQDSSDDNHSGTLGLSLTSDAPFLSDYQDEGMEDIVKGAQELDNVIKQGYLEKKSKDHSFFGSEWQKRWCVVSRGLFYYYANEKSKQPKGTFLIKGYGVRMAPHLRRDSKKESCFELTSQDRRSYEFTATSPAEARDWVDQISFLLKDLSSLTIPYEEDEEEEEKEETYDDIDGFDSPSCGSQCRPTILPGSVGIKEPTEEKEEEDIYEVLPDEEHDLEEDESGTRRKGVDYASYYQGLWDCHGDQPDELSFQRGDLIRILSKEYNMYGWWVGELNSLVGIVPKEYLTTAFEVEER.

Positions 107 to 210 (NVIKQGYLEK…WVDQISFLLK (104 aa)) constitute a PH domain. Y142, Y219, and Y232 each carry phosphotyrosine. The segment covering 219 to 237 (YEEDEEEEEKEETYDDIDG) has biased composition (acidic residues). Positions 219-239 (YEEDEEEEEKEETYDDIDGFD) are disordered. 2 positions are modified to phosphotyrosine; by FYN: Y271 and Y295. Positions 290-295 (RKGVDY) are interaction with FYB1. The SH3 domain occupies 294 to 355 (DYASYYQGLW…PKEYLTTAFE (62 aa)).

It belongs to the SKAP family. Homodimer. Interacts with FYN. Interacts with PTPRC. Interacts with GRB2 when phosphorylated on Tyr-271. Interacts with FYB1, which is required for SKAP2 protein stability. Part of a complex consisting of SKAP1, FYB1 and CLNK. Interacts with RASGRP1. Interacts with FYB2. In terms of processing, phosphorylated on tyrosines. Phosphorylation by FYN on Tyr-271 is required for GRB2 interaction. Phosphorylation by FYN on Tyr-295 abolishes interaction with FYB1. Tyr-232 is dephosphorylated by PTPRC. In terms of tissue distribution, highly expressed in thymocytes and peripheral blood lymphocytes. Also expressed in spleen cells and testis. Present in T-cells (at protein level).

The protein resides in the cytoplasm. The protein localises to the nucleus. Its subcellular location is the cell membrane. Its function is as follows. Positively regulates T-cell receptor signaling by enhancing the MAP kinase pathway. Required for optimal conjugation between T-cells and antigen-presenting cells by promoting the clustering of integrin ITGAL on the surface of T-cells. May be involved in high affinity immunoglobulin epsilon receptor signaling in mast cells. The sequence is that of Src kinase-associated phosphoprotein 1 (SKAP1) from Homo sapiens (Human).